The chain runs to 20 residues: Beta-fibrinogenase jerdofibrase (20 aa).

A Peptidase S1 domain is found at 1 to 20 (VIGGDECNINEHPFLVLVYY).

The protein belongs to the peptidase S1 family. Snake venom subfamily. In terms of assembly, monomer. In terms of tissue distribution, expressed by the venom gland.

The protein resides in the secreted. Inhibited by PMSF and soybean trypsin inhibitor. Partially inhibited by DTT and cysteine. Not affected by EDTA. Fibrin(ogen)olytic serine protease degrades Bbeta-chain of human fibrinogen (FGB) and shows a lower activity on Aa-chain (FGA). Also degrades fibrin directly. Releases fibrinopeptide B and a small amount of fibrinopeptide A. Has also be shown to catalyze the hydrolysis of some chromogenic substrates such as S2238, S2160, S2302 and S2251. In Protobothrops jerdonii (Jerdon's pitviper), this protein is Beta-fibrinogenase jerdofibrase.